We begin with the raw amino-acid sequence, 285 residues long: Putative hydrolase DDAH2 (285 aa).

The active-site Proton donor is the H171. Residue C276 is the Nucleophile of the active site.

This sequence belongs to the DDAH family. Post-translationally, phosphorylated by TBK1. Phosphorylation inhibits the translocation into the mitochondrion upon Sendai viral infection.

It localises to the cytoplasm. Its subcellular location is the mitochondrion. In terms of biological role, putative hydrolase with unknown substrate. Does not hydrolyze N(G),N(G)-dimethyl-L-arginine (ADMA) which acts as an inhibitor of NOS. In endothelial cells, induces expression of vascular endothelial growth factor (VEGF) via phosphorylation of the transcription factor SP1 by PKA in a process that is independent of NO and NO synthase. Similarly, enhances pancreatic insulin secretion through SP1-mediated transcriptional up-regulation of secretagogin/SCGN, an insulin vesicle docking protein. Upon viral infection, relocates to mitochondria where it promotes mitochondrial fission through activation of DNM1L leading to the inhibition of innate response activation mediated by MAVS. In Bos taurus (Bovine), this protein is Putative hydrolase DDAH2 (DDAH2).